A 607-amino-acid chain; its full sequence is DNA mismatch repair protein MutL (607 aa).

Residues 374-411 (RTEAGNEHVPSANRIQPPDPSIDMPDEPVPEQTDEPVA) form a disordered region. Over residues 397-407 (MPDEPVPEQTD) the composition is skewed to acidic residues.

The protein belongs to the DNA mismatch repair MutL/HexB family.

Functionally, this protein is involved in the repair of mismatches in DNA. It is required for dam-dependent methyl-directed DNA mismatch repair. May act as a 'molecular matchmaker', a protein that promotes the formation of a stable complex between two or more DNA-binding proteins in an ATP-dependent manner without itself being part of a final effector complex. This Exiguobacterium sibiricum (strain DSM 17290 / CCUG 55495 / CIP 109462 / JCM 13490 / 255-15) protein is DNA mismatch repair protein MutL.